The primary structure comprises 277 residues: 3-methyl-2-oxobutanoate hydroxymethyltransferase (277 aa).

Mg(2+) is bound by residues Asp-53 and Asp-96. 3-methyl-2-oxobutanoate is bound by residues 53 to 54 (DS), Asp-96, and Lys-126. A Mg(2+)-binding site is contributed by Glu-128. Glu-195 functions as the Proton acceptor in the catalytic mechanism.

This sequence belongs to the PanB family. Homodecamer; pentamer of dimers. It depends on Mg(2+) as a cofactor.

Its subcellular location is the cytoplasm. The enzyme catalyses 3-methyl-2-oxobutanoate + (6R)-5,10-methylene-5,6,7,8-tetrahydrofolate + H2O = 2-dehydropantoate + (6S)-5,6,7,8-tetrahydrofolate. Its pathway is cofactor biosynthesis; (R)-pantothenate biosynthesis; (R)-pantoate from 3-methyl-2-oxobutanoate: step 1/2. In terms of biological role, catalyzes the reversible reaction in which hydroxymethyl group from 5,10-methylenetetrahydrofolate is transferred onto alpha-ketoisovalerate to form ketopantoate. The protein is 3-methyl-2-oxobutanoate hydroxymethyltransferase of Pelodictyon phaeoclathratiforme (strain DSM 5477 / BU-1).